The chain runs to 320 residues: Formimidoylglutamase (320 aa).

Residues His125, Asp153, His155, Asp157, Asp244, and Asp246 each contribute to the Mn(2+) site.

It belongs to the arginase family. It depends on Mn(2+) as a cofactor.

The enzyme catalyses N-formimidoyl-L-glutamate + H2O = formamide + L-glutamate. Its pathway is amino-acid degradation; L-histidine degradation into L-glutamate; L-glutamate from N-formimidoyl-L-glutamate (hydrolase route): step 1/1. Catalyzes the conversion of N-formimidoyl-L-glutamate to L-glutamate and formamide. This chain is Formimidoylglutamase, found in Rhodococcus jostii (strain RHA1).